The sequence spans 182 residues: UPF0200 protein Mboo_1593 (182 aa).

8–15 serves as a coordination point for ATP; sequence GLPASGKG.

It belongs to the UPF0200 family.

The sequence is that of UPF0200 protein Mboo_1593 from Methanoregula boonei (strain DSM 21154 / JCM 14090 / 6A8).